Consider the following 122-residue polypeptide: Putative MOB kinase activator-like 2B (122 aa).

Residues His-69 and His-74 each coordinate Zn(2+).

The protein belongs to the MOB1/phocein family.

Its subcellular location is the nucleus. The protein localises to the cytoplasm. It is found in the cytoskeleton. It localises to the phragmoplast. The chain is Putative MOB kinase activator-like 2B from Arabidopsis thaliana (Mouse-ear cress).